The following is a 295-amino-acid chain: Mitochondrial dicarboxylate transporter (295 aa).

Solcar repeat units follow at residues 4–88, 96–188, and 198–286; these read KQVK…LKEH, TNMW…FKNF, and KKNS…LKKY. The next 6 membrane-spanning stretches (helical) occupy residues 8-24, 63-82, 98-122, 163-182, 204-224, and 262-280; these read YPWWYGGAAGIFAVMNT, GLSASLLRQCTYTTARFGMY, MWYLLGASMVSGALGGLAGNFADLI, GWKPNMVRGVLMTASQVVTY, LTSSLLAGFVATTVCSPADVI, and WVPSFTRLAPFTMLIFFAM.

Belongs to the mitochondrial carrier (TC 2.A.29) family. Homodimer.

Its subcellular location is the mitochondrion inner membrane. In terms of biological role, mitochondrial dicarboxylic transporter catalyzing the exchange of dicarboxylic acids like malate and succinate for inorganic phosphate. Required for growth on ethanol and acetate. The protein is Mitochondrial dicarboxylate transporter (DIC1) of Candida glabrata (strain ATCC 2001 / BCRC 20586 / JCM 3761 / NBRC 0622 / NRRL Y-65 / CBS 138) (Yeast).